The following is a 405-amino-acid chain: Acetate kinase (405 aa).

Asparagine 7 is a Mg(2+) binding site. Lysine 14 is a binding site for ATP. Arginine 99 is a substrate binding site. The active-site Proton donor/acceptor is aspartate 156. 215–219 (HLGNG) contacts ATP. Glutamate 391 is a Mg(2+) binding site.

This sequence belongs to the acetokinase family. As to quaternary structure, homodimer. Mg(2+) is required as a cofactor. Requires Mn(2+) as cofactor.

Its subcellular location is the cytoplasm. The enzyme catalyses acetate + ATP = acetyl phosphate + ADP. The protein operates within metabolic intermediate biosynthesis; acetyl-CoA biosynthesis; acetyl-CoA from acetate: step 1/2. In terms of biological role, catalyzes the formation of acetyl phosphate from acetate and ATP. Can also catalyze the reverse reaction. The sequence is that of Acetate kinase from Nostoc sp. (strain PCC 7120 / SAG 25.82 / UTEX 2576).